The following is a 35-amino-acid chain: Photosystem II reaction center protein T (35 aa).

A helical transmembrane segment spans residues 3–23; sequence ALVYTFLLVSTLGIIFFAIFF.

This sequence belongs to the PsbT family. In terms of assembly, PSII is composed of 1 copy each of membrane proteins PsbA, PsbB, PsbC, PsbD, PsbE, PsbF, PsbH, PsbI, PsbJ, PsbK, PsbL, PsbM, PsbT, PsbY, PsbZ, Psb30/Ycf12, at least 3 peripheral proteins of the oxygen-evolving complex and a large number of cofactors. It forms dimeric complexes.

It is found in the plastid. The protein resides in the chloroplast thylakoid membrane. Functionally, found at the monomer-monomer interface of the photosystem II (PS II) dimer, plays a role in assembly and dimerization of PSII. PSII is a light-driven water plastoquinone oxidoreductase, using light energy to abstract electrons from H(2)O, generating a proton gradient subsequently used for ATP formation. This is Photosystem II reaction center protein T from Ginkgo biloba (Ginkgo).